The following is a 293-amino-acid chain: Ribosomal protein L11 methyltransferase (293 aa).

4 residues coordinate S-adenosyl-L-methionine: Thr-145, Gly-166, Asp-188, and Asn-230.

This sequence belongs to the methyltransferase superfamily. PrmA family.

Its subcellular location is the cytoplasm. It carries out the reaction L-lysyl-[protein] + 3 S-adenosyl-L-methionine = N(6),N(6),N(6)-trimethyl-L-lysyl-[protein] + 3 S-adenosyl-L-homocysteine + 3 H(+). Its function is as follows. Methylates ribosomal protein L11. This is Ribosomal protein L11 methyltransferase from Escherichia coli (strain 55989 / EAEC).